Consider the following 260-residue polypeptide: Tryptophan 2,3-dioxygenase (260 aa).

Substrate-binding positions include 34-38 (FIVIH) and Arg-100. His-219 lines the heme pocket. Residue Thr-233 coordinates substrate.

It belongs to the tryptophan 2,3-dioxygenase family. Homotetramer. The cofactor is heme.

The enzyme catalyses L-tryptophan + O2 = N-formyl-L-kynurenine. Its pathway is amino-acid degradation; L-tryptophan degradation via kynurenine pathway; L-kynurenine from L-tryptophan: step 1/2. Heme-dependent dioxygenase that catalyzes the oxidative cleavage of the L-tryptophan (L-Trp) pyrrole ring and converts L-tryptophan to N-formyl-L-kynurenine. Catalyzes the oxidative cleavage of the indole moiety. The sequence is that of Tryptophan 2,3-dioxygenase from Herpetosiphon aurantiacus (strain ATCC 23779 / DSM 785 / 114-95).